The primary structure comprises 352 residues: Plant intracellular Ras-group-related LRR protein 1 (352 aa).

The interval 1-25 (MREMGEKRRRGHLNPAGFAGGLHDH) is disordered. LRR repeat units follow at residues 29–52 (KNEEHKLDMSGMSMDALPHLTMSL), 53–75 (GQVTILDLSNNNLESIPESIIAR), 77–99 (LNVVVLDVRSNQLKSLPNSIGCL), 100–122 (SKLKVLNVSGNLLESLPNTIEEC), 124–146 (ALEELHANFNELTKLPDTLGFEL), 147–169 (HSLRKLSVNSNKLAQLPSSTSHM), 171–192 (ALRALDARLNCLRALPDGLENL), 195–217 (LEALNVSQNFQFLRELPYAVGLL), 218–241 (ASLRELDVSYNSIAALPDSMGCLT), and 243–263 (LARFSAVGNPLVSPPMDVVEQ). The GVYW; degenerate signature appears at 264-271 (GLDAMRAY).

The protein belongs to the SHOC2 family. Widely expressed but at a lower level in seedlings and stems.

Leucine-rich repeat protein that likely mediates protein interactions, possibly in the context of signal transduction. The chain is Plant intracellular Ras-group-related LRR protein 1 (IRL1) from Oryza sativa subsp. japonica (Rice).